A 102-amino-acid polypeptide reads, in one-letter code: MHKARIKLTGTDPEKLAYVCDQLKKIAERTGVDMSGPIPLPTKRLVVPTRKSPDGEGTATWEKWEMRIHKRLVGIEADERAMRQVMKVNVPDNVSIEIELKS.

Belongs to the universal ribosomal protein uS10 family. Part of the 30S ribosomal subunit.

Functionally, involved in the binding of tRNA to the ribosomes. The sequence is that of Small ribosomal subunit protein uS10 from Methanothermobacter thermautotrophicus (strain ATCC 29096 / DSM 1053 / JCM 10044 / NBRC 100330 / Delta H) (Methanobacterium thermoautotrophicum).